A 630-amino-acid chain; its full sequence is Alpha-1,3-mannosyltransferase MNT3 (630 aa).

Residues 1 to 14 (MLKSLKSRRLILKR) lie on the Cytoplasmic side of the membrane. The chain crosses the membrane as a helical; Signal-anchor for type II membrane protein span at residues 15 to 31 (LVTLLLSLFFSYLIFSA). Residues 32–630 (SRNVTSSNKL…NDISRTWNAN (599 aa)) lie on the Lumenal side of the membrane. Residues asparagine 34 and asparagine 168 are each glycosylated (N-linked (GlcNAc...) asparagine).

Belongs to the MNN1/MNT family.

It localises to the golgi apparatus membrane. The protein operates within protein modification; protein glycosylation. Mannosyltransferase involved in adding the 4th and 5th mannose residues of O-linked glycans. This chain is Alpha-1,3-mannosyltransferase MNT3 (MNT3), found in Saccharomyces cerevisiae (strain ATCC 204508 / S288c) (Baker's yeast).